Here is a 433-residue protein sequence, read N- to C-terminus: Probable dipeptidase (433 aa).

Residue Cys20 is part of the active site.

It belongs to the peptidase C69 family.

The catalysed reaction is an L-aminoacyl-L-amino acid + H2O = 2 an L-alpha-amino acid. This is Probable dipeptidase (pipD) from Salmonella dublin.